The primary structure comprises 307 residues: Taste receptor type 2 member 41 (307 aa).

The Extracellular portion of the chain corresponds to Met1–Ala7. A helical membrane pass occupies residues Phe8–Val28. The Cytoplasmic portion of the chain corresponds to Leu29–Arg40. A helical membrane pass occupies residues Leu41–Val61. The Extracellular portion of the chain corresponds to Gly62–His88. The helical transmembrane segment at Trp89–Val109 threads the bilayer. The Cytoplasmic portion of the chain corresponds to Lys110–Trp129. The helical transmembrane segment at Val130 to Trp150 threads the bilayer. Over Val151–Ser183 the chain is Extracellular. N-linked (GlcNAc...) asparagine glycosylation occurs at Asn167. The chain crosses the membrane as a helical span at residues Leu184 to Ile204. Over Asn205–Lys234 the chain is Cytoplasmic. A helical transmembrane segment spans residues Ser235 to Thr255. Residues Lys256–Phe264 are Extracellular-facing. A helical transmembrane segment spans residues Tyr265–Phe285. At Ser286–Ala307 the chain is on the cytoplasmic side.

It belongs to the G-protein coupled receptor T2R family.

It localises to the membrane. Functionally, receptor that may play a role in the perception of bitterness and is gustducin-linked. May play a role in sensing the chemical composition of the gastrointestinal content. The activity of this receptor may stimulate alpha gustducin, mediate PLC-beta-2 activation and lead to the gating of TRPM5. The chain is Taste receptor type 2 member 41 (TAS2R41) from Pan troglodytes (Chimpanzee).